Consider the following 61-residue polypeptide: MNAKFILLLLVVTTTMLLPDTQGAEVIKCRTPKDCADPCRKQTGCPHGKCMNRTCRCNRCG.

The N-terminal stretch at 1–23 is a signal peptide; it reads MNAKFILLLLVVTTTMLLPDTQG. Intrachain disulfides connect cysteine 29–cysteine 50, cysteine 35–cysteine 55, cysteine 39–cysteine 57, and cysteine 45–cysteine 60. Position 60 is a cysteine amide (cysteine 60).

Belongs to the short scorpion toxin superfamily. Potassium channel inhibitor family. Alpha-KTx 06 subfamily. In terms of tissue distribution, expressed by the venom gland.

The protein localises to the secreted. Functionally, blocker of voltage-gated potassium channels. This is Potassium channel toxin alpha-KTx 6.7 from Opistophthalmus carinatus (African yellow leg scorpion).